The primary structure comprises 138 residues: Acidic phospholipase A2 Ts-A6 (138 aa).

A signal peptide spans 1–16 (MRALWIMAVLLLGVEG). Cystine bridges form between Cys42–Cys131, Cys44–Cys60, Cys59–Cys111, Cys65–Cys138, Cys66–Cys104, Cys73–Cys97, and Cys91–Cys102. Tyr43, Gly45, and Gly47 together coordinate Ca(2+). The active site involves His63. Asp64 lines the Ca(2+) pocket. Asp105 is a catalytic residue.

The cofactor is Ca(2+). Expressed by the venom gland.

It is found in the secreted. It carries out the reaction a 1,2-diacyl-sn-glycero-3-phosphocholine + H2O = a 1-acyl-sn-glycero-3-phosphocholine + a fatty acid + H(+). Snake venom phospholipase A2 (PLA2) that shows a moderate inhibition of ADP-induced human platelet aggregation when tested on platelet rich plasma. Exhibits high hydrolytic activities and prefers the anionic micelles (dPPC with deoxycholate) to the zwitterionic micelles (dPPC with Triton X-100). PLA2 catalyzes the calcium-dependent hydrolysis of the 2-acyl groups in 3-sn-phosphoglycerides. The polypeptide is Acidic phospholipase A2 Ts-A6 (Trimeresurus stejnegeri (Chinese green tree viper)).